Here is a 156-residue protein sequence, read N- to C-terminus: 6,7-dimethyl-8-ribityllumazine synthase (156 aa).

5-amino-6-(D-ribitylamino)uracil is bound by residues Trp22, Ala56 to Glu58, and Ala80 to Ile82. Asp85–Thr86 provides a ligand contact to (2S)-2-hydroxy-3-oxobutyl phosphate. His88 serves as the catalytic Proton donor. Position 113 (Phe113) interacts with 5-amino-6-(D-ribitylamino)uracil. Residue Arg127 coordinates (2S)-2-hydroxy-3-oxobutyl phosphate.

It belongs to the DMRL synthase family.

The catalysed reaction is (2S)-2-hydroxy-3-oxobutyl phosphate + 5-amino-6-(D-ribitylamino)uracil = 6,7-dimethyl-8-(1-D-ribityl)lumazine + phosphate + 2 H2O + H(+). It functions in the pathway cofactor biosynthesis; riboflavin biosynthesis; riboflavin from 2-hydroxy-3-oxobutyl phosphate and 5-amino-6-(D-ribitylamino)uracil: step 1/2. Its function is as follows. Catalyzes the formation of 6,7-dimethyl-8-ribityllumazine by condensation of 5-amino-6-(D-ribitylamino)uracil with 3,4-dihydroxy-2-butanone 4-phosphate. This is the penultimate step in the biosynthesis of riboflavin. The sequence is that of 6,7-dimethyl-8-ribityllumazine synthase from Deinococcus deserti (strain DSM 17065 / CIP 109153 / LMG 22923 / VCD115).